A 141-amino-acid chain; its full sequence is Putative nickel-responsive regulator (141 aa).

Ni(2+) is bound by residues H80, H91, H93, and C99.

This sequence belongs to the transcriptional regulatory CopG/NikR family. Ni(2+) is required as a cofactor.

Its function is as follows. Transcriptional regulator. The protein is Putative nickel-responsive regulator of Methanococcus vannielii (strain ATCC 35089 / DSM 1224 / JCM 13029 / OCM 148 / SB).